The primary structure comprises 86 residues: Large ribosomal subunit protein bL27 (86 aa).

The segment at 1-31 (MAHKKAGGSSRNGRDSAGQRRGVKKFGGEPV) is disordered.

Belongs to the bacterial ribosomal protein bL27 family.

This is Large ribosomal subunit protein bL27 from Desulfotalea psychrophila (strain LSv54 / DSM 12343).